The sequence spans 419 residues: Vascular endothelial growth factor C (419 aa).

Residues 1-31 (MHLLGFFSVACSLLAAALLPGPREAPAAAAA) form the signal peptide. The propeptide at 32 to 111 (FESGLDLSDA…RTEETIKFAA (80 aa)) is or 102. 3 cysteine pairs are disulfide-bonded: Cys131–Cys173, Cys162–Cys209, and Cys166–Cys211. N-linked (GlcNAc...) asparagine glycosylation is found at Asn175, Asn205, and Asn240. Residues 228–419 (SLPATLPQCQ…PSYWKRPQMS (192 aa)) constitute a propeptide that is removed on maturation. A run of 4 repeats spans residues 280–295 (CGPN…QCVC), 304–319 (CGPH…QCVC), 328–343 (CGAN…QCVC), and 347–362 (CPRN…ACEC). Positions 280-362 (CGPNKELDEE…LNPGKCACEC (83 aa)) are 4 X 16 AA repeats of C-X(10)-C-X-C-X(1,3)-C.

This sequence belongs to the PDGF/VEGF growth factor family. As to quaternary structure, homodimer; non-covalent and antiparallel. Interacts with FLT4/VEGFR3; the interaction is required for FLT4/VEGFR3 homodimarization and activation. In terms of processing, undergoes a complex proteolytic maturation which generates a variety of processed secreted forms with increased activity toward VEGFR-3, but only the fully processed form could activate VEGFR-2. VEGF-C first form an antiparallel homodimer linked by disulfide bonds. Before secretion, a cleavage occurs between Arg-227 and Ser-228 producing a heterotetramer. The next extracellular step of the processing removes the N-terminal propeptide. Finally the mature VEGF-C is composed mostly of two VEGF homology domains (VHDs) bound by non-covalent interactions. In terms of tissue distribution, expressed in the spleen. Expressed in the lymph node, thymus, appendix and bone marrow. Expressed in the heart, placenta, skeletal muscle, ovary and small intestine. Expressed in the prostate, testis and colon.

It localises to the secreted. Functionally, growth factor active in angiogenesis, and endothelial cell growth, stimulating their proliferation and migration and also has effects on the permeability of blood vessels. May function in angiogenesis of the venous and lymphatic vascular systems during embryogenesis, and also in the maintenance of differentiated lymphatic endothelium in adults. Binds and activates KDR/VEGFR2 and FLT4/VEGFR3 receptors. This chain is Vascular endothelial growth factor C (VEGFC), found in Homo sapiens (Human).